A 705-amino-acid chain; its full sequence is Elongation factor G (705 aa).

The region spanning 8–291 is the tr-type G domain; sequence EKVRNIGIMA…AVVEYLPSPI (284 aa). GTP contacts are provided by residues 17–24, 90–94, and 144–147; these read AHIDAGKT, DTPGH, and NKMD.

It belongs to the TRAFAC class translation factor GTPase superfamily. Classic translation factor GTPase family. EF-G/EF-2 subfamily.

The protein resides in the cytoplasm. Catalyzes the GTP-dependent ribosomal translocation step during translation elongation. During this step, the ribosome changes from the pre-translocational (PRE) to the post-translocational (POST) state as the newly formed A-site-bound peptidyl-tRNA and P-site-bound deacylated tRNA move to the P and E sites, respectively. Catalyzes the coordinated movement of the two tRNA molecules, the mRNA and conformational changes in the ribosome. The protein is Elongation factor G of Chloroherpeton thalassium (strain ATCC 35110 / GB-78).